We begin with the raw amino-acid sequence, 74 residues long: Translation initiation factor IF-1 (74 aa).

An S1-like domain is found at Met-1 to Ile-72.

It belongs to the IF-1 family. In terms of assembly, component of the 30S ribosomal translation pre-initiation complex which assembles on the 30S ribosome in the order IF-2 and IF-3, IF-1 and N-formylmethionyl-tRNA(fMet); mRNA recruitment can occur at any time during PIC assembly.

It is found in the cytoplasm. Functionally, one of the essential components for the initiation of protein synthesis. Stabilizes the binding of IF-2 and IF-3 on the 30S subunit to which N-formylmethionyl-tRNA(fMet) subsequently binds. Helps modulate mRNA selection, yielding the 30S pre-initiation complex (PIC). Upon addition of the 50S ribosomal subunit IF-1, IF-2 and IF-3 are released leaving the mature 70S translation initiation complex. This chain is Translation initiation factor IF-1, found in Mycoplasma capricolum subsp. capricolum (strain California kid / ATCC 27343 / NCTC 10154).